Reading from the N-terminus, the 147-residue chain is Large ribosomal subunit protein uL15 (147 aa).

A compositionally biased stretch (basic residues) spans 1–28; it reads MIRRRKKVRKLRGSHTHGWGCKKKHRGG. The segment at 1–43 is disordered; the sequence is MIRRRKKVRKLRGSHTHGWGCKKKHRGGGSKGGRGMAGTGKRN. A compositionally biased stretch (gly residues) spans 29–38; it reads GSKGGRGMAG.

The protein belongs to the universal ribosomal protein uL15 family. As to quaternary structure, part of the 50S ribosomal subunit.

Its function is as follows. Binds to the 23S rRNA. The sequence is that of Large ribosomal subunit protein uL15 from Pyrococcus horikoshii (strain ATCC 700860 / DSM 12428 / JCM 9974 / NBRC 100139 / OT-3).